A 73-amino-acid polypeptide reads, in one-letter code: FANLVEKTTYFSDKGEFEGFVAMVNKNVTLGNVIPASYKLQVYKTYDATHEGLIQSFVENGTEEVPLDGXEXX.

It belongs to the peptidase M49 family. It depends on Zn(2+) as a cofactor.

It localises to the membrane. It carries out the reaction Release of an N-terminal dipeptide from a peptide comprising four or more residues, with broad specificity. Also acts on dipeptidyl 2-naphthylamides.. Its function is as follows. Degrades neuropeptide proctolin (RYLPT) by cleavage between Tyr and Leu residues. In Blaberus craniifer (Death's head cockroach), this protein is Dipeptidyl peptidase 3.